The sequence spans 216 residues: Probable GTP-binding protein EngB (216 aa).

Positions 27–201 (EGIEVAFAGR…SQKLNTWFNE (175 aa)) constitute an EngB-type G domain. Residues 35-42 (GRSNAGKS), 62-66 (GRTQL), 80-83 (DLPG), 147-150 (TKAD), and 180-182 (FSS) contribute to the GTP site. 2 residues coordinate Mg(2+): Ser42 and Thr64.

The protein belongs to the TRAFAC class TrmE-Era-EngA-EngB-Septin-like GTPase superfamily. EngB GTPase family. Requires Mg(2+) as cofactor.

Its function is as follows. Necessary for normal cell division and for the maintenance of normal septation. The protein is Probable GTP-binding protein EngB of Serratia proteamaculans (strain 568).